A 179-amino-acid chain; its full sequence is Cytochrome b6-f complex iron-sulfur subunit (179 aa).

The helical transmembrane segment at 21–43 threads the bilayer; sequence LLTFGSATGVALGMLYPVVRYFI. In terms of domain architecture, Rieske spans 61-162; the sequence is GNDISVSDFL…AAVSDDKITF (102 aa). [2Fe-2S] cluster contacts are provided by cysteine 108, histidine 110, cysteine 126, and histidine 129. Cysteine 113 and cysteine 128 are disulfide-bonded.

Belongs to the Rieske iron-sulfur protein family. The 4 large subunits of the cytochrome b6-f complex are cytochrome b6, subunit IV (17 kDa polypeptide, PetD), cytochrome f and the Rieske protein, while the 4 small subunits are PetG, PetL, PetM and PetN. The complex functions as a dimer. It depends on [2Fe-2S] cluster as a cofactor.

Its subcellular location is the cellular thylakoid membrane. The catalysed reaction is 2 oxidized [plastocyanin] + a plastoquinol + 2 H(+)(in) = 2 reduced [plastocyanin] + a plastoquinone + 4 H(+)(out). Its function is as follows. Component of the cytochrome b6-f complex, which mediates electron transfer between photosystem II (PSII) and photosystem I (PSI), cyclic electron flow around PSI, and state transitions. The polypeptide is Cytochrome b6-f complex iron-sulfur subunit (Cyanothece sp. (strain PCC 7425 / ATCC 29141)).